Consider the following 99-residue polypeptide: Large ribosomal subunit protein uL23 (99 aa).

The protein belongs to the universal ribosomal protein uL23 family. In terms of assembly, part of the 50S ribosomal subunit. Contacts protein L29, and trigger factor when it is bound to the ribosome.

Its function is as follows. One of the early assembly proteins it binds 23S rRNA. One of the proteins that surrounds the polypeptide exit tunnel on the outside of the ribosome. Forms the main docking site for trigger factor binding to the ribosome. This is Large ribosomal subunit protein uL23 from Pseudomonas entomophila (strain L48).